Consider the following 72-residue polypeptide: Protein kish-A (72 aa).

A signal peptide spans 1–26 (MSAIFNFQSLLIVILLLICTCAYLRS). At 27–53 (LVPNLLDKNKTGVLGIFWKCARIGERK) the chain is on the extracellular side. A glycan (N-linked (GlcNAc...) asparagine) is linked at asparagine 35. Residues 54–71 (SPYVAVCCVVMAFSILFM) form a helical membrane-spanning segment. Position 72 (glutamine 72) is a topological domain, cytoplasmic.

It belongs to the KISH family.

It is found in the golgi apparatus membrane. Functionally, involved in the early part of the secretory pathway. The chain is Protein kish-A (tmem167a) from Xenopus laevis (African clawed frog).